The chain runs to 367 residues: Quinolinate synthase (367 aa).

Residues H45 and S62 each coordinate iminosuccinate. C109 lines the [4Fe-4S] cluster pocket. Residues 140 to 142 and S161 contribute to the iminosuccinate site; that span reads YVN. Residue C229 participates in [4Fe-4S] cluster binding. Residues 255-257 and T272 contribute to the iminosuccinate site; that span reads HPE. C319 is a [4Fe-4S] cluster binding site.

This sequence belongs to the quinolinate synthase family. Type 3 subfamily. The cofactor is [4Fe-4S] cluster.

It is found in the cytoplasm. It catalyses the reaction iminosuccinate + dihydroxyacetone phosphate = quinolinate + phosphate + 2 H2O + H(+). Its pathway is cofactor biosynthesis; NAD(+) biosynthesis; quinolinate from iminoaspartate: step 1/1. In terms of biological role, catalyzes the condensation of iminoaspartate with dihydroxyacetone phosphate to form quinolinate. This Anoxybacillus flavithermus (strain DSM 21510 / WK1) protein is Quinolinate synthase.